The sequence spans 157 residues: UPF0303 protein NT01EI_1570 (157 aa).

Belongs to the UPF0303 family.

This Edwardsiella ictaluri (strain 93-146) protein is UPF0303 protein NT01EI_1570.